The primary structure comprises 82 residues: Delta-conotoxin-like SmVIA (82 aa).

The signal sequence occupies residues 1–22; sequence MKLTCVMIVAVLFLIAWTFVTA. A propeptide spanning residues 23 to 49 is cleaved from the precursor; that stretch reads DDSRNGLKNLFPKARHEMKNPEASKLN. Cystine bridges form between Cys-54–Cys-69, Cys-61–Cys-73, and Cys-68–Cys-77. Residue Pro-65 is modified to 4-hydroxyproline.

Belongs to the conotoxin O1 superfamily. As to expression, expressed by the venom duct.

The protein resides in the secreted. Functionally, delta-conotoxins bind to site 6 of voltage-gated sodium channels (Nav) and inhibit the inactivation process. This is Delta-conotoxin-like SmVIA from Conus stercusmuscarum (Fly-specked cone).